A 392-amino-acid polypeptide reads, in one-letter code: Protein trapped in endoderm-1 (392 aa).

The Extracellular segment spans residues 1 to 39 (MDQDMGMATGYFQDADMQMDEPAAATQSIYPHSATLFAA). A helical membrane pass occupies residues 40–60 (ISACVFVTIGVLGNLITLLAL). Over 61-73 (LKSPTIREHATTA) the chain is Cytoplasmic. The helical transmembrane segment at 74–94 (FVISLSISDLLFCSFSLPLTA) threads the bilayer. Over 95-110 (VRFFQESWTFGTTLCK) the chain is Extracellular. Residues 111-131 (IFPVIFYGNVAVSLLSMVGIT) traverse the membrane as a helical segment. Topologically, residues 132–156 (LNRYILIACHSRYSQIYKPKFITLQ) are cytoplasmic. The chain crosses the membrane as a helical span at residues 157–177 (LLFVWAVSFLLLLPPILGIWG). Residues 178-202 (EMGLDEATFSCTILKKEGRSIKKTL) lie on the Extracellular side of the membrane. The helical transmembrane segment at 203 to 223 (FVIGFLLPCLVIIVSYSCIYI) threads the bilayer. Topologically, residues 224–268 (TVLHQKKKIRNHDNFQIAAAKGSSSSGGGSYMTTTCTRKAREDNR) are cytoplasmic. A helical membrane pass occupies residues 269-289 (LTVMMVTIFLCFLVCFLPLML). The Extracellular segment spans residues 290–302 (ANVVDDERNTSYP). An N-linked (GlcNAc...) asparagine glycan is attached at Asn298. The chain crosses the membrane as a helical span at residues 303–323 (WLHIIASVMAWASSVINPIIY). Residues 324-392 (AASNRNYRVA…INQMCQTYSV (69 aa)) are Cytoplasmic-facing. Phosphoserine occurs at positions 359, 362, and 366. At Thr372 the chain carries Phosphothreonine.

This sequence belongs to the G-protein coupled receptor 1 family. As to expression, in embryos, expression is seen at highest levels in the cuprophilic cells and at lower levels in the amnioserosa, developing CNS, cardiac mesoderm primordium and midline glia.

The protein localises to the cell membrane. Functionally, essential for the first active step of germ cell migration: transepithelial migration of germ cells through the posterior midgut (PMG) epithelium. This Drosophila melanogaster (Fruit fly) protein is Protein trapped in endoderm-1 (Tre1).